A 513-amino-acid polypeptide reads, in one-letter code: Na(+)/H(+) antiporter NhaB (513 aa).

The next 12 membrane-spanning stretches (helical) occupy residues 23 to 43 (LALI…PFVA), 52 to 72 (IFTL…LLAI), 97 to 117 (LLLM…LFIF), 120 to 140 (LLLS…AAAF), 144 to 164 (FLDA…FYGI), 202 to 222 (LMMH…VGEP), 238 to 258 (FFLR…LTCL), 303 to 323 (AIIG…VGLI), 348 to 368 (TESL…AVII), 391 to 411 (LFYI…VGTI), 447 to 467 (ATPN…APLI), and 475 to 495 (VWMA…CVEF).

Belongs to the NhaB Na(+)/H(+) (TC 2.A.34) antiporter family.

It localises to the cell inner membrane. It catalyses the reaction 2 Na(+)(in) + 3 H(+)(out) = 2 Na(+)(out) + 3 H(+)(in). Na(+)/H(+) antiporter that extrudes sodium in exchange for external protons. The sequence is that of Na(+)/H(+) antiporter NhaB from Escherichia coli O6:K15:H31 (strain 536 / UPEC).